Reading from the N-terminus, the 468-residue chain is 3-isopropylmalate dehydratase large subunit (468 aa).

The [4Fe-4S] cluster site is built by C346, C406, and C409.

The protein belongs to the aconitase/IPM isomerase family. LeuC type 1 subfamily. Heterodimer of LeuC and LeuD. [4Fe-4S] cluster serves as cofactor.

It carries out the reaction (2R,3S)-3-isopropylmalate = (2S)-2-isopropylmalate. It participates in amino-acid biosynthesis; L-leucine biosynthesis; L-leucine from 3-methyl-2-oxobutanoate: step 2/4. Its function is as follows. Catalyzes the isomerization between 2-isopropylmalate and 3-isopropylmalate, via the formation of 2-isopropylmaleate. This Pseudoalteromonas atlantica (strain T6c / ATCC BAA-1087) protein is 3-isopropylmalate dehydratase large subunit.